The sequence spans 276 residues: Shikimate dehydrogenase (NADP(+)) (276 aa).

Shikimate-binding positions include 20–22 (SRS) and Thr67. Residue Lys71 is the Proton acceptor of the active site. NADP(+) is bound at residue Asp83. Residues Asn92 and Asp107 each coordinate shikimate. NADP(+) is bound by residues 131–135 (GAGGA) and Ile217. Position 219 (Tyr219) interacts with shikimate. An NADP(+)-binding site is contributed by Gly240.

Belongs to the shikimate dehydrogenase family. In terms of assembly, homodimer.

The catalysed reaction is shikimate + NADP(+) = 3-dehydroshikimate + NADPH + H(+). Its pathway is metabolic intermediate biosynthesis; chorismate biosynthesis; chorismate from D-erythrose 4-phosphate and phosphoenolpyruvate: step 4/7. In terms of biological role, involved in the biosynthesis of the chorismate, which leads to the biosynthesis of aromatic amino acids. Catalyzes the reversible NADPH linked reduction of 3-dehydroshikimate (DHSA) to yield shikimate (SA). The chain is Shikimate dehydrogenase (NADP(+)) from Acidiphilium cryptum (strain JF-5).